A 94-amino-acid chain; its full sequence is Signal peptidase complex subunit 1 (94 aa).

Ser2 carries the post-translational modification N-acetylserine. Over 2 to 28 (SEILQDVQRKLVFPIDFPSQRKTEKFQ) the chain is Cytoplasmic. Residues 29 to 49 (QLSLMIGALVACILGFAQQSL) traverse the membrane as a helical segment. Residue Lys50 is a topological domain, lumenal. A helical membrane pass occupies residues 51–71 (VLLTAYGISCVITLICVLPAY). The Cytoplasmic segment spans residues 72–94 (PWYNKQKLRWAQPKIEINVDQYD).

The protein belongs to the SPCS1 family. Component of the signal peptidase complex (SPC) composed of a catalytic subunit SEC11 and three accessory subunits SPC1, SPC2 and SPC3. The complex induces a local thinning of the ER membrane which is used to measure the length of the signal peptide (SP) h-region of protein substrates. This ensures the selectivity of the complex towards h-regions shorter than 18-20 amino acids. SPC associates with the translocon complex. Interacts with SBH1 and SEB2/SBH2.

It localises to the endoplasmic reticulum membrane. Component of the signal peptidase complex (SPC) which catalyzes the cleavage of N-terminal signal sequences from nascent proteins as they are translocated into the lumen of the endoplasmic reticulum. Dispensable for SPC enzymatic activity. The polypeptide is Signal peptidase complex subunit 1 (SPC1) (Saccharomyces cerevisiae (strain ATCC 204508 / S288c) (Baker's yeast)).